Reading from the N-terminus, the 439-residue chain is GTPase Obg (439 aa).

The region spanning Met-1–Leu-159 is the Obg domain. The 177-residue stretch at Ala-160–Ala-336 folds into the OBG-type G domain. GTP is bound by residues Gly-166–Ser-173, Phe-191–Ser-195, Asp-213–Gly-216, Thr-283–Asp-286, and Ser-317–Ile-319. The Mg(2+) site is built by Ser-173 and Thr-193. The disordered stretch occupies residues Ala-338 to Tyr-357. Over residues Tyr-344–Glu-354 the composition is skewed to basic and acidic residues. The OCT domain occupies Thr-358–Glu-439.

The protein belongs to the TRAFAC class OBG-HflX-like GTPase superfamily. OBG GTPase family. As to quaternary structure, monomer. Mg(2+) is required as a cofactor.

It is found in the cytoplasm. In terms of biological role, an essential GTPase which binds GTP, GDP and possibly (p)ppGpp with moderate affinity, with high nucleotide exchange rates and a fairly low GTP hydrolysis rate. Plays a role in control of the cell cycle, stress response, ribosome biogenesis and in those bacteria that undergo differentiation, in morphogenesis control. This chain is GTPase Obg, found in Leuconostoc mesenteroides subsp. mesenteroides (strain ATCC 8293 / DSM 20343 / BCRC 11652 / CCM 1803 / JCM 6124 / NCDO 523 / NBRC 100496 / NCIMB 8023 / NCTC 12954 / NRRL B-1118 / 37Y).